A 299-amino-acid chain; its full sequence is Tetrahydromethanopterin S-methyltransferase subunit E (299 aa).

6 consecutive transmembrane segments (helical) span residues Ala-57–Leu-79, Gly-95–Gly-115, Ile-133–Leu-153, Leu-158–Ile-178, Gly-237–Ile-257, and Val-262–Ile-282.

It belongs to the MtrE family. As to quaternary structure, the complex is composed of 8 subunits; MtrA, MtrB, MtrC, MtrD, MtrE, MtrF, MtrG and MtrH.

Its subcellular location is the cell membrane. It carries out the reaction 5-methyl-5,6,7,8-tetrahydromethanopterin + coenzyme M + 2 Na(+)(in) = 5,6,7,8-tetrahydromethanopterin + methyl-coenzyme M + 2 Na(+)(out). Its pathway is one-carbon metabolism; methanogenesis from CO(2); methyl-coenzyme M from 5,10-methylene-5,6,7,8-tetrahydromethanopterin: step 2/2. Its function is as follows. Part of a complex that catalyzes the formation of methyl-coenzyme M and tetrahydromethanopterin from coenzyme M and methyl-tetrahydromethanopterin. This is an energy-conserving, sodium-ion translocating step. In Methanococcus maripaludis (strain C5 / ATCC BAA-1333), this protein is Tetrahydromethanopterin S-methyltransferase subunit E.